Here is a 116-residue protein sequence, read N- to C-terminus: uncharacterized protein (116 aa).

The protein belongs to the mimivirus L15/L51/R83 family.

This is an uncharacterized protein from Acanthamoeba polyphaga mimivirus (APMV).